Reading from the N-terminus, the 384-residue chain is 4-hydroxy-3-methylbut-2-en-1-yl diphosphate synthase (flavodoxin) (384 aa).

[4Fe-4S] cluster contacts are provided by Cys-280, Cys-283, Cys-315, and Glu-322.

It belongs to the IspG family. The cofactor is [4Fe-4S] cluster.

It carries out the reaction (2E)-4-hydroxy-3-methylbut-2-enyl diphosphate + oxidized [flavodoxin] + H2O + 2 H(+) = 2-C-methyl-D-erythritol 2,4-cyclic diphosphate + reduced [flavodoxin]. Its pathway is isoprenoid biosynthesis; isopentenyl diphosphate biosynthesis via DXP pathway; isopentenyl diphosphate from 1-deoxy-D-xylulose 5-phosphate: step 5/6. In terms of biological role, converts 2C-methyl-D-erythritol 2,4-cyclodiphosphate (ME-2,4cPP) into 1-hydroxy-2-methyl-2-(E)-butenyl 4-diphosphate. This chain is 4-hydroxy-3-methylbut-2-en-1-yl diphosphate synthase (flavodoxin), found in Frankia alni (strain DSM 45986 / CECT 9034 / ACN14a).